A 159-amino-acid polypeptide reads, in one-letter code: 18.0 kDa class I heat shock protein (159 aa).

The 115-residue stretch at 45 to 159 (ETAAFANTHI…PEVKSIHISG (115 aa)) folds into the sHSP domain.

The protein belongs to the small heat shock protein (HSP20) family. In terms of assembly, forms oligomeric structures.

It localises to the cytoplasm. The sequence is that of 18.0 kDa class I heat shock protein from Daucus carota (Wild carrot).